We begin with the raw amino-acid sequence, 498 residues long: Putative BTB/POZ domain-containing protein L788 (498 aa).

The 72-residue stretch at 28 to 99 (TDIILVLEDD…FYGQKIKSGN (72 aa)) folds into the BTB domain.

It belongs to the mimivirus BTB/WD family.

This Acanthamoeba polyphaga (Amoeba) protein is Putative BTB/POZ domain-containing protein L788.